A 512-amino-acid polypeptide reads, in one-letter code: Maturase K (512 aa).

Belongs to the intron maturase 2 family. MatK subfamily.

The protein resides in the plastid. It localises to the chloroplast. Its function is as follows. Usually encoded in the trnK tRNA gene intron. Probably assists in splicing its own and other chloroplast group II introns. The polypeptide is Maturase K (Lemna minuta (Least duckweed)).